Consider the following 340-residue polypeptide: MVSERGLDVLRVIVQDYVSSREPVGSKSIVERHAFGVSAATIRNDMALLEEEELIAAPHTSSGRVPTDKGYRLFVDQLADVRPLTPAQRQAIHVFLGESVDLDDVLARTVRLLAQLTNQVALVQYPSLATSHVKHVELVALSTTRVLTVLITDTGRVEQRVVELAGDPDDAFLAVMRTRINQAVGGLGLAEAATRLETLSDEVEPAQRAAASVLAGTLVEQVLANRQERLLLAGSANLARTERDFPGSISPVLEAIEEQVVLLRLLGEMEADQHGVSVSIGRENAPFGLGETSVLTSGYSSSGGVLARLGVLGPTRMDYSTNMASVRAVARYLSRLLEER.

This sequence belongs to the HrcA family.

In terms of biological role, negative regulator of class I heat shock genes (grpE-dnaK-dnaJ and groELS operons). Prevents heat-shock induction of these operons. The protein is Heat-inducible transcription repressor HrcA of Clavibacter michiganensis subsp. michiganensis (strain NCPPB 382).